Consider the following 240-residue polypeptide: PF03932 family protein CutC (240 aa).

It belongs to the CutC family.

The protein localises to the cytoplasm. In Xanthomonas campestris pv. campestris (strain 8004), this protein is PF03932 family protein CutC.